The primary structure comprises 353 residues: Ferredoxin--NADP reductase (353 aa).

7 residues coordinate FAD: aspartate 33, glutamine 41, tyrosine 46, valine 86, phenylalanine 121, aspartate 293, and threonine 333.

This sequence belongs to the ferredoxin--NADP reductase type 2 family. As to quaternary structure, homodimer. FAD serves as cofactor.

It catalyses the reaction 2 reduced [2Fe-2S]-[ferredoxin] + NADP(+) + H(+) = 2 oxidized [2Fe-2S]-[ferredoxin] + NADPH. The polypeptide is Ferredoxin--NADP reductase (Verminephrobacter eiseniae (strain EF01-2)).